The chain runs to 1588 residues: Centrosomal protein of 170 kDa (1588 aa).

An FHA domain is found at 23–73; sequence IFVGRDDCELMLQSRSVDKQHAVINYDASMDEHLVKDLGSLNGTFVNDVRI. 4 disordered regions span residues 121 to 172, 299 to 323, 338 to 447, and 461 to 508; these read LSQK…MPRG, KFTSDQRHKSKKASPGTQDLPGIQT, QNNP…EEPS, and SGSL…NPNS. At Ser-141 the chain carries Phosphoserine. Positions 155-164 are enriched in basic and acidic residues; sequence EALKSEEKPM. Basic and acidic residues predominate over residues 347–357; it reads ERTEEDSKSIK. Residues Ser-355 and Ser-358 each carry the phosphoserine modification. Tyr-363 bears the Phosphotyrosine mark. Positions 407-418 are enriched in basic and acidic residues; it reads KKKAQSTEKHQE. Ser-443, Ser-463, and Ser-494 each carry phosphoserine. Residue Thr-498 is modified to Phosphothreonine. 4 positions are modified to phosphoserine: Ser-568, Ser-577, Ser-628, and Ser-631. The segment at 602 to 854 is disordered; the sequence is ELSATVENET…PHINKQNSSV (253 aa). Positions 620–631 are enriched in polar residues; sequence LRSTSCTTSLAS. Thr-639 is subject to Phosphothreonine. The segment covering 645–654 has biased composition (basic and acidic residues); the sequence is NEEKLLESSR. A Phosphoserine modification is found at Ser-662. The segment covering 663 to 691 has biased composition (basic and acidic residues); sequence EIGEKQDTELQEKEAQVYQSEKHDADRGL. Ser-718 is subject to Phosphoserine. Basic and acidic residues predominate over residues 720–731; that stretch reads SKEKSETEKETS. Residue Thr-752 is modified to Phosphothreonine. Basic and acidic residues-rich tracts occupy residues 764-774 and 789-821; these read HIDKCREESSK and SKGDRVIQNESKRRKAEEIPKCQASKGDKKESS. Over residues 822-839 the composition is skewed to polar residues; it reads KSLVRQGSFTIDKPSSNI. Phosphoserine is present on residues Ser-829, Ser-870, and Ser-872. A targeting to microtubules region spans residues 844-1588; sequence IPHINKQNSS…GEEEDVTVHE (745 aa). Residues 899–908 show a composition bias toward basic and acidic residues; it reads LREDNNKTDE. 2 disordered regions span residues 899 to 1222 and 1228 to 1247; these read LRED…RWRR and ASTSEDEFGSNRNSPKHTRL. 2 positions are modified to phosphothreonine: Thr-906 and Thr-912. Polar residues predominate over residues 913 to 937; the sequence is PSYNRDNSISPESDVDTASTISLVT. Residues Ser-922, Ser-925, and Ser-950 each carry the phosphoserine modification. A compositionally biased stretch (basic and acidic residues) spans 967-980; the sequence is DVTKSGSREKIEKK. Ser-1008 carries the post-translational modification Phosphoserine. At Thr-1012 the chain carries Phosphothreonine. The span at 1028 to 1038 shows a compositional bias: polar residues; it reads IMSSDQETYSC. Position 1047 is a phosphothreonine (Thr-1047). Ser-1048 carries the post-translational modification Phosphoserine. Residues 1049–1062 are compositionally biased toward basic and acidic residues; that stretch reads ADEHNIHSKLEGGK. Residues 1075-1093 are compositionally biased toward low complexity; the sequence is STSKSTTLPRPRPTRTSLL. Phosphoserine occurs at positions 1102, 1104, 1122, 1123, 1135, 1150, and 1155. The interval 1103 to 1588 is targeting to centrosomes; sequence DSELADADKA…GEEEDVTVHE (486 aa). Positions 1112–1128 are enriched in low complexity; sequence ASVASEVSTTSSTSKPP. Low complexity predominate over residues 1158–1173; that stretch reads EATISRSSASARTAEA. 8 positions are modified to phosphoserine: Ser-1188, Ser-1195, Ser-1200, Ser-1229, Ser-1231, Ser-1241, Ser-1260, and Ser-1270. Polar residues predominate over residues 1191–1218; that stretch reads TRANSISRLSDSKVKSMSSTHGSPSVNS. The interval 1315 to 1334 is disordered; sequence SVTSSGTAPSTTVSTAATTP. Phosphoserine is present on Ser-1362. The interval 1370-1398 is disordered; that stretch reads PLVHSKTPEGNNGRSVDSRPQPAEHPDHL. Residues 1467–1495 are a coiled coil; that stretch reads KTSSMEISSILQELKRVEKQLQVINAMID. Residues 1511 to 1540 form a disordered region; it reads AILPSPPKQKSSPVNNHSSPSQTPALCPPE. Over residues 1518-1534 the composition is skewed to polar residues; that stretch reads KQKSSPVNNHSSPSQTP. Residues Ser-1521 and Ser-1522 each carry the phosphoserine modification.

The protein belongs to the CEP170 family. In terms of assembly, interacts with CCDC68 and CCDC120; leading to recruitment to centrosomes. Interacts with PLK1. Interacts with NIN. Interacts with FHDC1. Interacts with CCDC61. Interacts with TBK1; efficient complex formation may be dependent on the presence of CCDC61. In terms of processing, phosphorylated; probably by PLK1.

It is found in the cytoplasm. The protein resides in the cytoskeleton. The protein localises to the microtubule organizing center. Its subcellular location is the centrosome. It localises to the centriole. It is found in the spindle. Functionally, plays a role in microtubule organization. Required for centriole subdistal appendage assembly. In Mus musculus (Mouse), this protein is Centrosomal protein of 170 kDa (Cep170).